The following is a 69-amino-acid chain: UPF0150 protein ssr1258 (69 aa).

The protein belongs to the UPF0150 family.

This is UPF0150 protein ssr1258 from Synechocystis sp. (strain ATCC 27184 / PCC 6803 / Kazusa).